Reading from the N-terminus, the 247-residue chain is Homeobox-leucine zipper protein HOX15 (247 aa).

Residues 1–44 (MAQDDEDVGLALGLSLGSGGHRRQRESRDEAPSSAAASLLTLRL) form a disordered region. Positions 32–44 (PSSAAASLLTLRL) are enriched in low complexity. Positions 91–150 (NSRKKLRLSKEQSALLEDRFKEHSTLNPKQKVALAKQLNLRPRQVEVWFQNRRARTKLKQ) form a DNA-binding region, homeobox. Positions 149–193 (KQTEVDCELLKRCCETLTEENRRLHRELQQLRALTHSTAAGFFMA) are leucine-zipper. Residues 221–247 (SPTAAADRTNKPTAPHLFSPFAKSAAC) are disordered.

It belongs to the HD-ZIP homeobox family. Class II subfamily. Expressed in seedlings, stems, leaf blades and panicles.

The protein localises to the nucleus. Its function is as follows. Probable transcription factor. The chain is Homeobox-leucine zipper protein HOX15 (HOX15) from Oryza sativa subsp. japonica (Rice).